The sequence spans 767 residues: MSTLTSVSGFPRIGQNRELKKIIEGYWKGANDLAAVKATAAELRAKHWRLQQAAGIDLIASNDFSYYDQMLDTAILLNVIPQRYQRLAFDDQEDTLFAMARGYQGDKGDVTALPMKKWFTTNYHYLVPEVEPSAEIKLNSTKPFDEFNEAKSLGVETKPVFIGPYTFLKLARTPEAAELEIDKGLVNAVAAVYAEVLARFNDLGAAWVQLDEPYLVLDKEPGDVELFKALYTKILPAKGNVKVLLNTYFGHIADVYETVNLFGFDGIGLDLNEGREENLEAVAKYGVAAGTTIFAGVINGRNIWRNNYATSLGLVDALKQVTADVAVSTASSLLHVPFSTEGETGIPAEDLKHFAFAVQKLGELKEIAALTDATEDEKKSSAALAANQALFDGTRVAADPAVAERIGKLSDADYVRQPAREERQSLQREALGLPLLPTTTIGSFPQTKEIRAERAKLRKGEVTKEAYDEFIASQIDAVIRKQEEIGLDVLVHGEFERNDMVEYFGQNLNGFLFTKNAWVQSYGTRCVKPPIVWGDVSRANPITVEWSAYAQSKTDHVMKGMLTGPVTILNWSWPREDITHEEQTKQLALAIRDEVLDLEAAGIKIIQIDEAALREKLPLRKSDWHAKYLDWAIPAFRLVHSAVKPTTQIHTHMCYSEFNDIIRDIDAMDADVISFEASRGDLVVLDAIHDARFETEAGPGVYDIHSPRIPSEKEIEDRIYEILDKIDVKKVWINPDCGLKTRGNDETWPSLEHLVAAAKAVRARLDK.

5-methyltetrahydropteroyltri-L-glutamate-binding positions include 17 to 20 (RELK) and lysine 117. L-homocysteine-binding positions include 441-443 (IGS) and glutamate 494. Residues 441–443 (IGS) and glutamate 494 each bind L-methionine. 5-methyltetrahydropteroyltri-L-glutamate is bound by residues 525–526 (RC) and tryptophan 571. Aspartate 609 serves as a coordination point for L-homocysteine. L-methionine is bound at residue aspartate 609. Glutamate 615 lines the 5-methyltetrahydropteroyltri-L-glutamate pocket. Residues histidine 652, cysteine 654, and glutamate 676 each contribute to the Zn(2+) site. Histidine 705 serves as the catalytic Proton donor. Cysteine 737 provides a ligand contact to Zn(2+).

This sequence belongs to the vitamin-B12 independent methionine synthase family. It depends on Zn(2+) as a cofactor.

It carries out the reaction 5-methyltetrahydropteroyltri-L-glutamate + L-homocysteine = tetrahydropteroyltri-L-glutamate + L-methionine. It participates in amino-acid biosynthesis; L-methionine biosynthesis via de novo pathway; L-methionine from L-homocysteine (MetE route): step 1/1. In terms of biological role, catalyzes the transfer of a methyl group from 5-methyltetrahydrofolate to homocysteine resulting in methionine formation. The protein is 5-methyltetrahydropteroyltriglutamate--homocysteine methyltransferase of Bifidobacterium longum subsp. infantis (strain ATCC 15697 / DSM 20088 / JCM 1222 / NCTC 11817 / S12).